Here is a 377-residue protein sequence, read N- to C-terminus: Copper-containing nitrite reductase (377 aa).

The segment at residues 1 to 35 (MTNTLQMTRRTMLTGAAVAGALTPILTSGGGNASP) is a signal peptide (tat-type signal). Plastocyanin-like domains lie at 99 to 194 (MTFD…IMVL) and 259 to 360 (GAVG…FKVT). Cu cation-binding residues include histidine 132, histidine 137, histidine 172, cysteine 173, histidine 182, methionine 187, and histidine 343.

This sequence belongs to the multicopper oxidase family. In terms of assembly, homotrimer. Cu(2+) serves as cofactor. It depends on Cu(+) as a cofactor. Requires FAD as cofactor. Post-translationally, predicted to be exported by the Tat system. The position of the signal peptide cleavage has not been experimentally proven.

It localises to the periplasm. The enzyme catalyses nitric oxide + Fe(III)-[cytochrome c] + H2O = Fe(II)-[cytochrome c] + nitrite + 2 H(+). The protein operates within nitrogen metabolism; nitrate reduction (denitrification); dinitrogen from nitrate: step 2/4. In Rhizobium sullae (Rhizobium hedysari), this protein is Copper-containing nitrite reductase (nirK).